The primary structure comprises 179 residues: Adenine phosphoribosyltransferase (179 aa).

It belongs to the purine/pyrimidine phosphoribosyltransferase family. As to quaternary structure, homodimer.

The protein resides in the cytoplasm. The catalysed reaction is AMP + diphosphate = 5-phospho-alpha-D-ribose 1-diphosphate + adenine. It participates in purine metabolism; AMP biosynthesis via salvage pathway; AMP from adenine: step 1/1. Functionally, catalyzes a salvage reaction resulting in the formation of AMP, that is energically less costly than de novo synthesis. This chain is Adenine phosphoribosyltransferase, found in Mycolicibacterium gilvum (strain PYR-GCK) (Mycobacterium gilvum (strain PYR-GCK)).